The primary structure comprises 289 residues: G1/S-specific cyclin-D2 (289 aa).

In terms of domain architecture, Cyclin N-terminal spans 26-151 (VLQNLLTIEE…VVLGKLKWNL (126 aa)). The disordered stretch occupies residues 264–289 (DQGDGSKSEDELDQASTPTDVRDIDL). Ser-271 is modified (phosphoserine). Thr-280 is modified (phosphothreonine).

The protein belongs to the cyclin family. Cyclin D subfamily. As to quaternary structure, interacts with either CDK4 or CDK6 protein kinase to form a serine/threonine kinase holoenzyme complex. The cyclin subunit imparts substrate specificity to the complex. Phosphorylation at Thr-280 by MAP kinases is required for ubiquitination and degradation by the DCX(AMBRA1) complex. In terms of processing, ubiquitinated by the DCX(AMBRA1) complex during the transition from G1 to S cell phase, leading to its degradation: ubiquitination is dependent on Thr-280 phosphorylation. The DCX(AMBRA1) complex represents the major regulator of CCND2 stability during the G1/S transition. Polyubiquitinated by the SCF(FBXL2) complex, leading to proteasomal degradation.

Its subcellular location is the nucleus. The protein resides in the cytoplasm. It localises to the nucleus membrane. Regulatory component of the cyclin D2-CDK4 (DC) complex that phosphorylates and inhibits members of the retinoblastoma (RB) protein family including RB1 and regulates the cell-cycle during G(1)/S transition. Phosphorylation of RB1 allows dissociation of the transcription factor E2F from the RB/E2F complex and the subsequent transcription of E2F target genes which are responsible for the progression through the G(1) phase. Hypophosphorylates RB1 in early G(1) phase. Cyclin D-CDK4 complexes are major integrators of various mitogenenic and antimitogenic signals. The sequence is that of G1/S-specific cyclin-D2 (CCND2) from Bos taurus (Bovine).